The following is a 251-amino-acid chain: ATP synthase delta chain, chloroplastic (251 aa).

The N-terminal 64 residues, 1 to 64 (MASLQHTTAS…STGGALGARM (64 aa)), are a transit peptide targeting the chloroplast.

It belongs to the ATPase delta chain family. In terms of assembly, F-type ATPases have 2 components, CF(1) - the catalytic core - and CF(0) - the membrane proton channel. CF(1) has five subunits: alpha(3), beta(3), gamma(1), delta(1), epsilon(1). CF(0) has three main subunits: a, b and c.

The protein resides in the plastid. Its subcellular location is the chloroplast thylakoid membrane. This protein seems to be part of the stalk that links CF(0) to CF(1). It either transmits conformational changes from CF(0) into CF(1) or is implicated in proton conduction. The polypeptide is ATP synthase delta chain, chloroplastic (ATPD) (Pisum sativum (Garden pea)).